A 78-amino-acid chain; its full sequence is Conotoxin 1 (78 aa).

The first 22 residues, 1-22 (MKLTCMMFVAVLFLTASVFITA), serve as a signal peptide directing secretion. The propeptide occupies 23–51 (DDSRNGIENLPRMRRHEMKNPKASKLNKR). At glutamine 52 the chain carries Pyrrolidone carboxylic acid. Intrachain disulfides connect cysteine 53–cysteine 69, cysteine 60–cysteine 73, and cysteine 68–cysteine 77.

It belongs to the conotoxin O1 superfamily. In terms of tissue distribution, expressed by the venom duct.

Its subcellular location is the secreted. In Conus imperialis (Imperial cone), this protein is Conotoxin 1.